Consider the following 245-residue polypeptide: Ribonuclease 3 (245 aa).

In terms of domain architecture, RNase III spans Phe19–Gly148. Residue Glu61 participates in Mg(2+) binding. The active site involves Asp65. Mg(2+) is bound by residues Asp134 and Glu137. Glu137 is a catalytic residue. Residues Asp174–Glu243 form the DRBM domain.

Belongs to the ribonuclease III family. In terms of assembly, homodimer. Requires Mg(2+) as cofactor.

The protein localises to the cytoplasm. It carries out the reaction Endonucleolytic cleavage to 5'-phosphomonoester.. Functionally, digests double-stranded RNA. Involved in the processing of primary rRNA transcript to yield the immediate precursors to the large and small rRNAs (23S and 16S). Processes some mRNAs, and tRNAs when they are encoded in the rRNA operon. Processes pre-crRNA and tracrRNA of type II CRISPR loci if present in the organism. This is Ribonuclease 3 from Bacillus cereus (strain ATCC 14579 / DSM 31 / CCUG 7414 / JCM 2152 / NBRC 15305 / NCIMB 9373 / NCTC 2599 / NRRL B-3711).